The primary structure comprises 226 residues: MNKLETNNNQYWLDRWQNDDVGFCQESPNEFLVKHFSKLNINDSSVCLIPMCGCSIDMLFFLSKGVKVIGIELSEKAVLSFFSQNTINYEVIHGNDYKLYKGDDIEIYVADIFNLPKIANNLPVFDIWYDRGAYIALPNDLRTNYAKMMLEVCSNNTQILLLVMEHDKKSQTPPYSVTQAELIKNFSAKIKFELIDSKQRDNIPDYRKAEGMTEQYYTTYLRKKQY.

Residues W16, M51, E72, and R131 each coordinate S-adenosyl-L-methionine.

Belongs to the class I-like SAM-binding methyltransferase superfamily. TPMT family.

It localises to the cytoplasm. The catalysed reaction is S-adenosyl-L-methionine + a thiopurine = S-adenosyl-L-homocysteine + a thiopurine S-methylether.. The protein is Thiopurine S-methyltransferase of Francisella tularensis subsp. tularensis (strain SCHU S4 / Schu 4).